We begin with the raw amino-acid sequence, 60 residues long: Large ribosomal subunit protein eL37 (60 aa).

4 residues coordinate Zn(2+): C19, C22, C34, and C37. Residues 19-37 (CRRCGRMSYHKRHKICSSC) form a C4-type zinc finger.

It belongs to the eukaryotic ribosomal protein eL37 family. Requires Zn(2+) as cofactor.

Functionally, binds to the 23S rRNA. This is Large ribosomal subunit protein eL37 from Methanospirillum hungatei JF-1 (strain ATCC 27890 / DSM 864 / NBRC 100397 / JF-1).